The sequence spans 1051 residues: Transcription intermediary factor 1-alpha (1051 aa).

The interval 1–42 (MEVAVEKAAAAAAPAGGPAAAAPSGENEAESRQGPDSESGGE) is disordered. A Glycyl lysine isopeptide (Lys-Gly) (interchain with G-Cter in SUMO2) cross-link involves residue Lys7. Positions 8–23 (AAAAAAPAGGPAAAAP) are enriched in low complexity. The RING-type zinc-finger motif lies at 52–77 (CAVCHQNIQSRVPKLLPCLHSFCQRC). The tract at residues 94 to 115 (SAETPPPAPAPAPAPGSPAGGP) is disordered. Thr97 carries the post-translational modification Phosphothreonine. The segment covering 97-109 (TPPPAPAPAPAPG) has biased composition (pro residues). Ser110 carries the post-translational modification Phosphoserine. B box-type zinc fingers lie at residues 158-211 (KSNQ…VSPE) and 218-259 (QRPV…YQFI). Cys163, Cys166, Cys187, and His200 together coordinate Zn(2+). Residue Lys205 forms a Glycyl lysine isopeptide (Lys-Gly) (interchain with G-Cter in SUMO2) linkage. Positions 223, 226, 246, and 251 each coordinate Zn(2+). Residue Lys276 forms a Glycyl lysine isopeptide (Lys-Gly) (interchain with G-Cter in SUMO2) linkage. Residues 289-359 (NQIQNRIIEI…AGLSKQLEHV (71 aa)) are a coiled coil. Residues 429–457 (ESQPQMPKQNPVVEQSSQPPGGLPSNQLS) form a disordered region. The span at 431–457 (QPQMPKQNPVVEQSSQPPGGLPSNQLS) shows a compositional bias: polar residues. Glycyl lysine isopeptide (Lys-Gly) (interchain with G-Cter in SUMO2) cross-links involve residues Lys436 and Lys458. Arg469 is subject to Omega-N-methylarginine. Low complexity-rich tracts occupy residues 479–490 (AQRQQVQRRPAP) and 501–510 (PIQQPSISHQ). Residues 479-551 (AQRQQVQRRP…PSQNVPRQTT (73 aa)) form a disordered region. Over residues 526-535 (PNGPVLPPYP) the composition is skewed to pro residues. Positions 538 to 551 (LRYSPSQNVPRQTT) are enriched in polar residues. Glycyl lysine isopeptide (Lys-Gly) (interchain with G-Cter in SUMO2) cross-links involve residues Lys553 and Lys642. Positions 644 to 713 (TGVDHAQPRP…PAGADSTHKV (70 aa)) are disordered. Phosphoserine occurs at positions 655, 661, and 668. Residues 655–667 (SNRTVQSPNSSVP) show a composition bias toward polar residues. The segment covering 686 to 708 (SPSASSVGSRGSSGSSSKPAGAD) has biased composition (low complexity). Residues Lys703 and Lys712 each participate in a glycyl lysine isopeptide (Lys-Gly) (interchain with G-Cter in SUMO2) cross-link. Glycyl lysine isopeptide (Lys-Gly) (interchain with G-Cter in SUMO); alternate cross-links involve residues Lys724 and Lys742. Residue Lys724 forms a Glycyl lysine isopeptide (Lys-Gly) (interchain with G-Cter in SUMO1); alternate linkage. Residues Lys724 and Lys742 each participate in a glycyl lysine isopeptide (Lys-Gly) (interchain with G-Cter in SUMO2); alternate cross-link. Ser745 and Ser769 each carry phosphoserine. The interval 755-780 (NYPRSILTSLLLNSSQSSASEETVLR) is nuclear receptor binding site (NRBS). The segment at 771–827 (SSASEETVLRSDAPDSTGDQPGLHQENSSNGKSEWSDASQKSPVHVGETRKEDDPNE) is disordered. The segment covering 795–812 (QENSSNGKSEWSDASQKS) has biased composition (polar residues). Lys802 is covalently cross-linked (Glycyl lysine isopeptide (Lys-Gly) (interchain with G-Cter in SUMO2)). Position 809 is a phosphoserine (Ser809). A Glycyl lysine isopeptide (Lys-Gly) (interchain with G-Cter in SUMO2) cross-link involves residue Lys811. The residue at position 812 (Ser812) is a Phosphoserine. Thr819 bears the Phosphothreonine mark. The PHD-type zinc-finger motif lies at 827–874 (EDWCAVCQNGGELLCCEKCPKVFHLTCHVPTLTNFPSGEWICTFCRDL). An interaction with histone H3 that is not methylated at 'Lys-4' (H3K4me0) region spans residues 835 to 841 (NGGELLC). A Glycyl lysine isopeptide (Lys-Gly) (interchain with G-Cter in SUMO2) cross-link involves residue Lys876. The Nuclear localization signal motif lies at 892–908 (KRKSEGLTKLTPIDKRK). In terms of domain architecture, Bromo spans 900 to 1005 (KLTPIDKRKC…SYFEELLKNL (106 aa)). Glycyl lysine isopeptide (Lys-Gly) (interchain with G-Cter in SUMO2) cross-links involve residues Lys950 and Lys993. The interval 1024-1051 (KFSDDSDDDFVQPRKKRLKSTEDRQLLK) is disordered. Residues Ser1026 and Ser1029 each carry the phosphoserine modification. Residue Lys1042 forms a Glycyl lysine isopeptide (Lys-Gly) (interchain with G-Cter in SUMO2) linkage. Basic and acidic residues predominate over residues 1042-1051 (KSTEDRQLLK). Ser1043 is subject to Phosphoserine.

In terms of assembly, interacts (via bromo domain) with histone H3 (via N-terminus), provided that it is not methylated at 'Lys-4' (H3K4me0). Does not interact with histone H3 that is methylated at 'Lys-4' (H3K4me1, H3K4me2 or H3K4me3). Interacts (via bromo domain) with histone H3 (via N-terminus) that is acetylated at 'Lys-23' (H3K23ac). Has the highest affinity for histone H3 that is both unmodified at 'Lys-4' (H3K4me0) and acetylated at 'Lys-23' (H3K23ac). Has very low affinity for histone H3 that is methylated at 'Lys-9' (H3K9me), or acetylated at both 'Lys-9' (H3K9ac) and 'Lys-14' (H3K14ac), or acetylated at 'Lys-27' (H3K27ac) (in vitro). Interacts with TRIM16. Interacts with NR3C2/MCR. Interacts with the ligand-binding domain of estrogen receptors (in vitro). Interaction with DNA-bound estrogen receptors requires the presence of estradiol. Interacts with AR, CARM1, KAT5/TIP60, NCOA2/GRIP1, BRD7, CBX1, CBX3 and CBX5. Part of a coactivator complex containing TRIM24, NCOA2/GRIP1 and CARM1. Interacts with p53/TP53 and PML. Sumoylated. Post-translationally, phosphorylated at Ser-768 by ATM kinase induces ubiquitination and degradation during DNA damage. In terms of processing, undergoes ubiquitination-mediated degradation in response to DNA damage. In terms of tissue distribution, detected in embryonic and adult liver. Detected in zygote and throughout embryogenesis (at protein level). Detected in all adult tissues, with the highest expression level in testis.

The protein resides in the nucleus. The protein localises to the cytoplasm. The catalysed reaction is S-ubiquitinyl-[E2 ubiquitin-conjugating enzyme]-L-cysteine + [acceptor protein]-L-lysine = [E2 ubiquitin-conjugating enzyme]-L-cysteine + N(6)-ubiquitinyl-[acceptor protein]-L-lysine.. The protein operates within protein modification; protein ubiquitination. Its function is as follows. Transcriptional coactivator that interacts with numerous nuclear receptors and coactivators and modulates the transcription of target genes. Interacts with chromatin depending on histone H3 modifications, having the highest affinity for histone H3 that is both unmodified at 'Lys-4' (H3K4me0) and acetylated at 'Lys-23' (H3K23ac). Has E3 protein-ubiquitin ligase activity. Promotes ubiquitination and proteasomal degradation of p53/TP53. Plays a role in the regulation of cell proliferation and apoptosis via its effects on p53/TP53 levels. Up-regulates ligand-dependent transcription activation by AR, GCR/NR3C1, thyroid hormone receptor (TR) and ESR1. Modulates transcription activation by retinoic acid (RA) receptors, such as RARA. Plays a role in regulating retinoic acid-dependent proliferation of hepatocytes. Required for normal transition from proliferating neonatal hepatocytes to quiescent adult hepatocytes. Transcriptional coactivator that interacts with numerous nuclear receptors and coactivators and modulates the transcription of target genes. Interacts with chromatin depending on histone H3 modifications, having the highest affinity for histone H3 that is both unmodified at 'Lys-4' (H3K4me0) and acetylated at 'Lys-23' (H3K23ac). Has E3 protein-ubiquitin ligase activity. During the DNA damage response, participates in an autoregulatory feedback loop with TP53. Early in response to DNA damage, ATM kinase phosphorylates TRIM24 leading to its ubiquitination and degradation. After sufficient DNA repair has occurred, TP53 activates TRIM24 transcription, ultimately leading to TRIM24-mediated TP53 ubiquitination and degradation. Plays a role in the regulation of cell proliferation and apoptosis, at least in part via its effects on p53/TP53 levels. Up-regulates ligand-dependent transcription activation by AR, GCR/NR3C1, thyroid hormone receptor (TR) and ESR1. Modulates transcription activation by retinoic acid (RA) receptors, including RARA. Plays a role in regulating retinoic acid-dependent proliferation of hepatocytes. Also participates in innate immunity by mediating the specific 'Lys-63'-linked ubiquitination of TRAF3 leading to activation of downstream signal transduction of the type I IFN pathway. Additionally, negatively regulates NLRP3/CASP1/IL-1beta-mediated pyroptosis and cell migration probably by ubiquitinating NLRP3. The sequence is that of Transcription intermediary factor 1-alpha (Trim24) from Mus musculus (Mouse).